The primary structure comprises 210 residues: Thymidylate kinase (210 aa).

10–17 contributes to the ATP binding site; the sequence is GPEGAGKS.

This sequence belongs to the thymidylate kinase family.

It carries out the reaction dTMP + ATP = dTDP + ADP. Its function is as follows. Phosphorylation of dTMP to form dTDP in both de novo and salvage pathways of dTTP synthesis. This Ectopseudomonas mendocina (strain ymp) (Pseudomonas mendocina) protein is Thymidylate kinase.